A 532-amino-acid polypeptide reads, in one-letter code: MENELLNHPHNNNMVNGHQDAPYDALSMKNDAEMLEQIKQLLMENNNLKETMKQMNQEMKERLEELLKRHNQHLLDLNSANEVLRKELQSLKEKIATSNQGSAVCSTSEEASENKQLKNQLTRLQAEKADLLGLISELQLKLGSFSEDSFVEIGFSERESGEIVNEEKANKILSDHNISYRTNSIKEEGGGTEPEEVAISRLLRSLREETQKVERLEKELFSANKRLAELEKQTSEFCDKGVQTEQESEQSQSEVIISSEVDILKEKVKSLNKELQETNDKLNEAKQFKNSLQEKCILLDKRLQENQVDLEEKQSLRYSIKKLELQVESQESEIKLEQNKTEAEKNQLGILQVSYDKLNSEYQELRIREIEKVSKVEFNELLEKLDVCEKALAKKQFEIDEMREMDTKHEEDKETIELLRAQVDVYCADFHAERSARENIHQEKEQLATRLAYMIQEYEKLKEEMMGKQSIEQLQRRHGATSLLDASEGPYLVARGAANMEQPSITVYTCPKCNLTVPDMDTLQIHVMDCIT.

Coiled coils occupy residues 27-143 and 195-466; these read SMKN…LKLG and EEVA…EEMM. The CCHC NOA-type zinc-finger motif lies at 502–532; that stretch reads QPSITVYTCPKCNLTVPDMDTLQIHVMDCIT. Zn(2+)-binding residues include cysteine 510, cysteine 513, histidine 526, and cysteine 530.

It is found in the cytoplasm. The protein localises to the perinuclear region. Its subcellular location is the golgi apparatus. It localises to the trans-Golgi network. The protein resides in the cytoplasmic vesicle. It is found in the recycling endosome. The protein localises to the autophagosome. Probably part of the TNF-alpha signaling pathway that can shift the equilibrium toward induction of cell death. May act by regulating membrane trafficking and cellular morphogenesis. This is Optineurin (optn) from Xenopus laevis (African clawed frog).